A 202-amino-acid chain; its full sequence is UPF0056 membrane protein CPn_1010/CP_0843/CPj1010/CpB1048 (202 aa).

The next 6 helical transmembrane spans lie at 7–27 (LSLLFYVLFDSPGSIPVFVAL), 39–59 (VILRECLFALGALILFVTFGR), 61–81 (FFQFLDISLYAFQIIGGFLLF), 105–125 (PIFFPLAFPVITGPAVITALL), 137–157 (IIFTAMIIAWAFSLFTLLCSS), and 175–195 (FGIALLLMSVNLMLKGISIAF).

Belongs to the UPF0056 (MarC) family.

The protein localises to the cell membrane. The sequence is that of UPF0056 membrane protein CPn_1010/CP_0843/CPj1010/CpB1048 from Chlamydia pneumoniae (Chlamydophila pneumoniae).